Reading from the N-terminus, the 313-residue chain is tRNA pseudouridine synthase B (313 aa).

D48 functions as the Nucleophile in the catalytic mechanism.

Belongs to the pseudouridine synthase TruB family. Type 1 subfamily.

The enzyme catalyses uridine(55) in tRNA = pseudouridine(55) in tRNA. Responsible for synthesis of pseudouridine from uracil-55 in the psi GC loop of transfer RNAs. The chain is tRNA pseudouridine synthase B from Saccharophagus degradans (strain 2-40 / ATCC 43961 / DSM 17024).